The chain runs to 252 residues: Triosephosphate isomerase (252 aa).

9-11 lines the substrate pocket; the sequence is NWK. H96 acts as the Electrophile in catalysis. The Proton acceptor role is filled by E166. Substrate is bound by residues G172, S212, and 233-234; that span reads GG.

This sequence belongs to the triosephosphate isomerase family. Homodimer.

The protein localises to the cytoplasm. It carries out the reaction D-glyceraldehyde 3-phosphate = dihydroxyacetone phosphate. Its pathway is carbohydrate biosynthesis; gluconeogenesis. It functions in the pathway carbohydrate degradation; glycolysis; D-glyceraldehyde 3-phosphate from glycerone phosphate: step 1/1. In terms of biological role, involved in the gluconeogenesis. Catalyzes stereospecifically the conversion of dihydroxyacetone phosphate (DHAP) to D-glyceraldehyde-3-phosphate (G3P). This is Triosephosphate isomerase from Prosthecochloris aestuarii (strain DSM 271 / SK 413).